The chain runs to 393 residues: Aspartate aminotransferase (393 aa).

3 residues coordinate L-aspartate: Gly-38, Trp-124, and Asn-174. At Lys-237 the chain carries N6-(pyridoxal phosphate)lysine.

Belongs to the class-I pyridoxal-phosphate-dependent aminotransferase family. In terms of assembly, homodimer. The cofactor is pyridoxal 5'-phosphate.

Its subcellular location is the cytoplasm. The enzyme catalyses L-aspartate + 2-oxoglutarate = oxaloacetate + L-glutamate. The sequence is that of Aspartate aminotransferase (aspB) from Bacillus subtilis (strain 168).